The sequence spans 496 residues: L-arabinose isomerase (496 aa).

Positions 302, 329, 346, and 445 each coordinate Mn(2+).

The protein belongs to the arabinose isomerase family. It depends on Mn(2+) as a cofactor.

It carries out the reaction beta-L-arabinopyranose = L-ribulose. Its pathway is carbohydrate degradation; L-arabinose degradation via L-ribulose; D-xylulose 5-phosphate from L-arabinose (bacterial route): step 1/3. Functionally, catalyzes the conversion of L-arabinose to L-ribulose. This is L-arabinose isomerase from Thermotoga maritima (strain ATCC 43589 / DSM 3109 / JCM 10099 / NBRC 100826 / MSB8).